We begin with the raw amino-acid sequence, 85 residues long: Large ribosomal subunit protein bL31B (85 aa).

It belongs to the bacterial ribosomal protein bL31 family. Type B subfamily. In terms of assembly, part of the 50S ribosomal subunit.

The polypeptide is Large ribosomal subunit protein bL31B (Clavibacter sepedonicus (Clavibacter michiganensis subsp. sepedonicus)).